The following is a 706-amino-acid chain: DNA ligase (706 aa).

NAD(+) contacts are provided by residues 48–52 (DAAYD), 97–98 (SL), and E131. K133 (N6-AMP-lysine intermediate) is an active-site residue. NAD(+) contacts are provided by R154, E191, K307, and K331. Zn(2+)-binding residues include C425, C428, C443, and C449. Residues 628–706 (RADSAVAGKT…EDEWLKLIEG (79 aa)) form the BRCT domain.

Belongs to the NAD-dependent DNA ligase family. LigA subfamily. Requires Mg(2+) as cofactor. Mn(2+) serves as cofactor.

The catalysed reaction is NAD(+) + (deoxyribonucleotide)n-3'-hydroxyl + 5'-phospho-(deoxyribonucleotide)m = (deoxyribonucleotide)n+m + AMP + beta-nicotinamide D-nucleotide.. Its function is as follows. DNA ligase that catalyzes the formation of phosphodiester linkages between 5'-phosphoryl and 3'-hydroxyl groups in double-stranded DNA using NAD as a coenzyme and as the energy source for the reaction. It is essential for DNA replication and repair of damaged DNA. This Afipia carboxidovorans (strain ATCC 49405 / DSM 1227 / KCTC 32145 / OM5) (Oligotropha carboxidovorans) protein is DNA ligase.